Reading from the N-terminus, the 642-residue chain is Threonine--tRNA ligase (642 aa).

Residues 1 to 61 (MPVITLPDGS…ETDAELSIIT (61 aa)) form the TGS domain. A catalytic region spans residues 243–534 (DHRKIGKQLD…LIEEYAGRFP (292 aa)). Zn(2+) contacts are provided by cysteine 334, histidine 385, and histidine 511.

This sequence belongs to the class-II aminoacyl-tRNA synthetase family. Homodimer. The cofactor is Zn(2+).

The protein resides in the cytoplasm. The catalysed reaction is tRNA(Thr) + L-threonine + ATP = L-threonyl-tRNA(Thr) + AMP + diphosphate + H(+). In terms of biological role, catalyzes the attachment of threonine to tRNA(Thr) in a two-step reaction: L-threonine is first activated by ATP to form Thr-AMP and then transferred to the acceptor end of tRNA(Thr). Also edits incorrectly charged L-seryl-tRNA(Thr). In Shewanella sp. (strain ANA-3), this protein is Threonine--tRNA ligase.